The chain runs to 278 residues: Undecaprenyl-diphosphatase (278 aa).

The next 8 membrane-spanning stretches (helical) occupy residues 2–22 (ALVEIFKAILLGIVEGITEWL), 44–64 (AFMEMFFVVIQLGAILAVVLL), 85–105 (IEMWFKIIVSCIPAGVIGLLW), 113–133 (FYNYQTVAVMLIIFGILFIVI), 150–170 (ITYTTAFMIGIFQLIAAIFPG), 189–209 (TVAAEFTFFLAIPVMFGASAL), 223–243 (LMILLIGMVVAFIVSVISIKF), and 253–273 (FKIFGWYRIILGVIVLLYFSA).

It belongs to the UppP family.

The protein resides in the cell membrane. It carries out the reaction di-trans,octa-cis-undecaprenyl diphosphate + H2O = di-trans,octa-cis-undecaprenyl phosphate + phosphate + H(+). Its function is as follows. Catalyzes the dephosphorylation of undecaprenyl diphosphate (UPP). Confers resistance to bacitracin. In Desulfitobacterium hafniense (strain DSM 10664 / DCB-2), this protein is Undecaprenyl-diphosphatase.